A 239-amino-acid chain; its full sequence is MLEIGFCTLEDQCPYLKDKRSRIEYKYIENCSKEINNELIKRGWRRFGRYFSRPICKDCDECLSLRILVNEYNFSRSERRVVNKNINTKVILRTPNLSNEHLFLYDKYHRFMEEKKNWKRYDLSFKQYYNLYVDGFMNFGYELAFYIEDKLVCVDLIDILEDGISSIYCFYDPDFSYFSLGKFSLLNEIQIAKKMNLDYIYLGYFVKKCQSLSYKADYTPNEILKGTKELFENEVLWEK.

Belongs to the R-transferase family. Bpt subfamily.

The protein localises to the cytoplasm. The catalysed reaction is N-terminal L-glutamyl-[protein] + L-leucyl-tRNA(Leu) = N-terminal L-leucyl-L-glutamyl-[protein] + tRNA(Leu) + H(+). It catalyses the reaction N-terminal L-aspartyl-[protein] + L-leucyl-tRNA(Leu) = N-terminal L-leucyl-L-aspartyl-[protein] + tRNA(Leu) + H(+). Its function is as follows. Functions in the N-end rule pathway of protein degradation where it conjugates Leu from its aminoacyl-tRNA to the N-termini of proteins containing an N-terminal aspartate or glutamate. The protein is Aspartate/glutamate leucyltransferase of Campylobacter jejuni subsp. jejuni serotype O:23/36 (strain 81-176).